We begin with the raw amino-acid sequence, 223 residues long: Small ribosomal subunit protein uS3 (223 aa).

A KH type-2 domain is found at 39 to 115 (IRKYIEKNLA…RVFINIVEIK (77 aa)).

Belongs to the universal ribosomal protein uS3 family. Part of the 30S ribosomal subunit. Forms a tight complex with proteins S10 and S14.

Its function is as follows. Binds the lower part of the 30S subunit head. Binds mRNA in the 70S ribosome, positioning it for translation. This chain is Small ribosomal subunit protein uS3, found in Leuconostoc mesenteroides subsp. mesenteroides (strain ATCC 8293 / DSM 20343 / BCRC 11652 / CCM 1803 / JCM 6124 / NCDO 523 / NBRC 100496 / NCIMB 8023 / NCTC 12954 / NRRL B-1118 / 37Y).